Reading from the N-terminus, the 747-residue chain is uncharacterized protein (747 aa).

A helical membrane pass occupies residues 7-27 (FFLKVISVIAPIVIIPTILAN).

The protein resides in the membrane. This is an uncharacterized protein from Ureaplasma parvum serovar 3 (strain ATCC 700970).